Here is a 277-residue protein sequence, read N- to C-terminus: Phosphoenolpyruvate synthase regulatory protein (277 aa).

ADP is bound at residue 157 to 164 (GVSRCGKT).

This sequence belongs to the pyruvate, phosphate/water dikinase regulatory protein family. PSRP subfamily.

The enzyme catalyses [pyruvate, water dikinase] + ADP = [pyruvate, water dikinase]-phosphate + AMP + H(+). The catalysed reaction is [pyruvate, water dikinase]-phosphate + phosphate + H(+) = [pyruvate, water dikinase] + diphosphate. Functionally, bifunctional serine/threonine kinase and phosphorylase involved in the regulation of the phosphoenolpyruvate synthase (PEPS) by catalyzing its phosphorylation/dephosphorylation. In Escherichia coli O17:K52:H18 (strain UMN026 / ExPEC), this protein is Phosphoenolpyruvate synthase regulatory protein.